The following is a 293-amino-acid chain: MLGAETSLQALTSATRTGPAAFSTKSKAGKNTVPRTVAGAIAEYKRQHCAAMGIGIGPRLLSECPFAVTFDRYSPDSSAALERVIVAAYRQVLGNLPPTDNQRETSLEVRLMNGEITVRDFVNGLAKSDFYKDNFFHAVGAQRGIELNFKHLLGRAPLNQQEVQNHIKLQAEEGFDALIDTLTDSAEYTEVFGADIVPYDRTKDSYAGMNTRSFNLMRDLGGMKVAISDNAQGRQSKTVNALASASRESTKPQPFSYVSVTQIPVKLPQQQYTGHNVPAMSDYVPFRPFGIFF.

A phycourobilin-binding site is contributed by C49. The PBS-linker domain maps to 50 to 229; that stretch reads AAMGIGIGPR…LGGMKVAISD (180 aa).

Contains one covalently linked phycourobilin chromophore.

It is found in the cellular thylakoid membrane. Its function is as follows. This protein is a bile pigment-bearing rod linker polypeptide that associates with C-phycoerythrin. The polypeptide is Phycoerythrin class 2 subunit gamma, linker polypeptide (mpeC) (Synechococcus sp. (strain WH8020)).